The following is a 251-amino-acid chain: MLAKRIIPCLDVTGGRVVKGINFEGLRDAGSILEQARFYNGELADELVFLDISASVESRKTTLEEVLKVSGEVFIPLTVGGGINSVDRAREIFMHGADKVSVNTAVVKEPELISRIAEKYGSQAVVVAIDVKKKDDRYMVHTHSGKIPTPLEAVEWAQMVQELGAGEILLTSMDRDGTQEGYDNDILAKVSTSVHIPVIASGGAGNLEHLYDGFTRGKADAALAASIFHFRQYSIRQAKQYLRDRGIPVRL.

Active-site residues include aspartate 11 and aspartate 130.

The protein belongs to the HisA/HisF family. In terms of assembly, heterodimer of HisH and HisF.

The protein localises to the cytoplasm. The enzyme catalyses 5-[(5-phospho-1-deoxy-D-ribulos-1-ylimino)methylamino]-1-(5-phospho-beta-D-ribosyl)imidazole-4-carboxamide + L-glutamine = D-erythro-1-(imidazol-4-yl)glycerol 3-phosphate + 5-amino-1-(5-phospho-beta-D-ribosyl)imidazole-4-carboxamide + L-glutamate + H(+). It participates in amino-acid biosynthesis; L-histidine biosynthesis; L-histidine from 5-phospho-alpha-D-ribose 1-diphosphate: step 5/9. In terms of biological role, IGPS catalyzes the conversion of PRFAR and glutamine to IGP, AICAR and glutamate. The HisF subunit catalyzes the cyclization activity that produces IGP and AICAR from PRFAR using the ammonia provided by the HisH subunit. This chain is Imidazole glycerol phosphate synthase subunit HisF, found in Chlorobium limicola (strain DSM 245 / NBRC 103803 / 6330).